The chain runs to 299 residues: Transcription elongation factor A protein 2 (299 aa).

One can recognise a TFIIS N-terminal domain in the interval 5–82; the sequence is EEIARIARRL…KSWKKLLDVS (78 aa). Lysine 57 is covalently cross-linked (Glycyl lysine isopeptide (Lys-Gly) (interchain with G-Cter in ubiquitin)). Phosphoserine is present on residues serine 59 and serine 100. A disordered region spans residues 82 to 127; it reads SDGKSRNQGRGTPLPTSSSKDASRTTDLSCKKPDPPRTPSTPRITT. Positions 87 to 101 are enriched in polar residues; sequence RNQGRGTPLPTSSSK. Residues 102 to 116 are compositionally biased toward basic and acidic residues; the sequence is DASRTTDLSCKKPDP. One can recognise a TFIIS central domain in the interval 138 to 254; that stretch reads VRNKCREMLT…EHQMARTGGT (117 aa). A TFIIS-type zinc finger spans residues 257–297; that stretch reads DLFTCNKCRKKNCTYTQVQTRSSDEPMTTYVVCNECGNRWK. Zn(2+) contacts are provided by cysteine 261, cysteine 264, cysteine 289, and cysteine 292.

This sequence belongs to the TFS-II family. In terms of assembly, interacts with the basal transcription factor GTF2B. Interacts with REXO1. Testis and ovary specific. Specific to testicular germ cells.

It is found in the nucleus. Functionally, necessary for efficient RNA polymerase II transcription elongation past template-encoded arresting sites. The arresting sites in DNA have the property of trapping a certain fraction of elongating RNA polymerases that pass through, resulting in locked ternary complexes. Cleavage of the nascent transcript by S-II allows the resumption of elongation from the new 3'-terminus. The sequence is that of Transcription elongation factor A protein 2 (Tcea2) from Mus musculus (Mouse).